We begin with the raw amino-acid sequence, 422 residues long: GPI mannosyltransferase 1 (422 aa).

8 helical membrane-spanning segments follow: residues 10–30 (TTPLFTISLLLRLGLLFYGIY), 82–102 (FPAFGKLVFAAADLLAGWLIL), 162–182 (IILGLSVHFKIYPFIYAPAIV), 216–236 (LKFGLLSLITFMILNLVMFAI), 282–302 (IESFAFLPQLLLSCVLIPLAL), 327–347 (SQYFLWYMIFLPLYLPNSSFL), 352–372 (LGIFALLLWIVSQAAWLQQGY), and 385–405 (GLWLASIAFFLVNCWILGVII).

Belongs to the PIGM family.

The protein localises to the endoplasmic reticulum membrane. Its pathway is glycolipid biosynthesis; glycosylphosphatidylinositol-anchor biosynthesis. Mannosyltransferase involved in glycosylphosphatidylinositol-anchor biosynthesis. Transfers the first alpha-1,4-mannose to GlcN-acyl-PI during GPI precursor assembly. Required for cell wall integrity. This is GPI mannosyltransferase 1 (GPI14) from Gibberella zeae (strain ATCC MYA-4620 / CBS 123657 / FGSC 9075 / NRRL 31084 / PH-1) (Wheat head blight fungus).